Consider the following 173-residue polypeptide: Crossover junction endodeoxyribonuclease RuvC (173 aa).

Active-site residues include Asp-8, Glu-67, and Asp-139. Mg(2+) is bound by residues Asp-8, Glu-67, and Asp-139.

It belongs to the RuvC family. In terms of assembly, homodimer which binds Holliday junction (HJ) DNA. The HJ becomes 2-fold symmetrical on binding to RuvC with unstacked arms; it has a different conformation from HJ DNA in complex with RuvA. In the full resolvosome a probable DNA-RuvA(4)-RuvB(12)-RuvC(2) complex forms which resolves the HJ. The cofactor is Mg(2+).

Its subcellular location is the cytoplasm. It catalyses the reaction Endonucleolytic cleavage at a junction such as a reciprocal single-stranded crossover between two homologous DNA duplexes (Holliday junction).. The RuvA-RuvB-RuvC complex processes Holliday junction (HJ) DNA during genetic recombination and DNA repair. Endonuclease that resolves HJ intermediates. Cleaves cruciform DNA by making single-stranded nicks across the HJ at symmetrical positions within the homologous arms, yielding a 5'-phosphate and a 3'-hydroxyl group; requires a central core of homology in the junction. The consensus cleavage sequence is 5'-(A/T)TT(C/G)-3'. Cleavage occurs on the 3'-side of the TT dinucleotide at the point of strand exchange. HJ branch migration catalyzed by RuvA-RuvB allows RuvC to scan DNA until it finds its consensus sequence, where it cleaves and resolves the cruciform DNA. This Tolumonas auensis (strain DSM 9187 / NBRC 110442 / TA 4) protein is Crossover junction endodeoxyribonuclease RuvC.